We begin with the raw amino-acid sequence, 243 residues long: NAD(P)H-quinone oxidoreductase subunit K, chloroplastic (243 aa).

[4Fe-4S] cluster is bound by residues Cys-65, Cys-66, Cys-130, and Cys-161.

Belongs to the complex I 20 kDa subunit family. In terms of assembly, NDH is composed of at least 16 different subunits, 5 of which are encoded in the nucleus. [4Fe-4S] cluster serves as cofactor.

The protein resides in the plastid. Its subcellular location is the chloroplast thylakoid membrane. It catalyses the reaction a plastoquinone + NADH + (n+1) H(+)(in) = a plastoquinol + NAD(+) + n H(+)(out). It carries out the reaction a plastoquinone + NADPH + (n+1) H(+)(in) = a plastoquinol + NADP(+) + n H(+)(out). Its function is as follows. NDH shuttles electrons from NAD(P)H:plastoquinone, via FMN and iron-sulfur (Fe-S) centers, to quinones in the photosynthetic chain and possibly in a chloroplast respiratory chain. The immediate electron acceptor for the enzyme in this species is believed to be plastoquinone. Couples the redox reaction to proton translocation, and thus conserves the redox energy in a proton gradient. This Marchantia polymorpha (Common liverwort) protein is NAD(P)H-quinone oxidoreductase subunit K, chloroplastic.